The chain runs to 368 residues: Microtubule-associated protein Jupiter (368 aa).

Phosphoserine is present on S30. Phosphothreonine is present on T41. A compositionally biased stretch (basic and acidic residues) spans R81–L93. The segment at R81–N106 is disordered. T102 carries the phosphothreonine modification. A phosphoserine mark is found at S111, S146, and S157. 2 stretches are compositionally biased toward low complexity: residues N129–S157 and G238–R248. Disordered stretches follow at residues N129–N164, S196–N256, and K316–W368. Polar residues predominate over residues G337–N354.

It belongs to the MAP Jupiter family.

The protein localises to the nucleus. It is found in the cytoplasm. Its subcellular location is the cytoskeleton. The protein resides in the spindle. Functionally, binds to all microtubule populations. The protein is Microtubule-associated protein Jupiter of Drosophila willistoni (Fruit fly).